The primary structure comprises 350 residues: Methylthioribose-1-phosphate isomerase (350 aa).

Residues arginine 48–alanine 50, arginine 93, and glutamine 198 each bind substrate. Aspartate 239 serves as the catalytic Proton donor. Asparagine 249–lysine 250 serves as a coordination point for substrate.

Belongs to the eIF-2B alpha/beta/delta subunits family. MtnA subfamily.

It carries out the reaction 5-(methylsulfanyl)-alpha-D-ribose 1-phosphate = 5-(methylsulfanyl)-D-ribulose 1-phosphate. It participates in amino-acid biosynthesis; L-methionine biosynthesis via salvage pathway; L-methionine from S-methyl-5-thio-alpha-D-ribose 1-phosphate: step 1/6. Functionally, catalyzes the interconversion of methylthioribose-1-phosphate (MTR-1-P) into methylthioribulose-1-phosphate (MTRu-1-P). This is Methylthioribose-1-phosphate isomerase from Fervidobacterium nodosum (strain ATCC 35602 / DSM 5306 / Rt17-B1).